A 387-amino-acid chain; its full sequence is MTSSGFLRAHPGVVRRCGFTRGGGLKVGPCALTDPGLAWVHAYYTDEALNWLAGLDNPLWKSGADVMDLLPGDMYVSEHVFKKILSRVGPEFFDSFIPIREVEECILFGFSPLSSTGMAALKAIDLVYGGYAPAAPGIPMEVYAWEMAYKIGAAPRLLRWVLIEGEGIEQFATLAESGLRGSLRDYIGTHPSGCKTPMDLGLVVKNVHGLVAALGMLMDSNIYHGDLKIDNLTVTEPGGPYKLIDFEFAHPFEARMRPMIEARGPITWLMPGTPACNPPEHDEETPCRDRRMKELGVTWQLGLIMLETIVLDEALVRDENMEWKRPDFKRLVSAVMEENGSLAPHDPRLLEGYLDLIGECLKRDTAVRMDLVTLMTELSLLIEKFKL.

The Protein kinase domain occupies 82–381 (KKILSRVGPE…VTLMTELSLL (300 aa)). Residue Lys122 participates in ATP binding. Asp226 (proton acceptor) is an active-site residue.

This sequence belongs to the protein kinase superfamily. Ser/Thr protein kinase family.

It catalyses the reaction L-seryl-[protein] + ATP = O-phospho-L-seryl-[protein] + ADP + H(+). The enzyme catalyses L-threonyl-[protein] + ATP = O-phospho-L-threonyl-[protein] + ADP + H(+). This Ictalurid herpesvirus 1 (strain Auburn) (IcHV-1) protein is Protein kinase ORF16 (ORF16).